Consider the following 989-residue polypeptide: Phosphoenolpyruvate carboxylase (989 aa).

Residues His-175 and Lys-630 contribute to the active site.

The protein belongs to the PEPCase type 1 family. Requires Mg(2+) as cofactor.

It carries out the reaction oxaloacetate + phosphate = phosphoenolpyruvate + hydrogencarbonate. Forms oxaloacetate, a four-carbon dicarboxylic acid source for the tricarboxylic acid cycle. This Prochlorococcus marinus (strain MIT 9515) protein is Phosphoenolpyruvate carboxylase.